Here is a 241-residue protein sequence, read N- to C-terminus: Uracil-DNA glycosylase (241 aa).

Residue Asp71 is the Proton acceptor of the active site.

Belongs to the uracil-DNA glycosylase (UDG) superfamily. UNG family.

The protein resides in the cytoplasm. It catalyses the reaction Hydrolyzes single-stranded DNA or mismatched double-stranded DNA and polynucleotides, releasing free uracil.. Functionally, excises uracil residues from the DNA which can arise as a result of misincorporation of dUMP residues by DNA polymerase or due to deamination of cytosine. The protein is Uracil-DNA glycosylase of Xanthomonas axonopodis pv. citri (strain 306).